The primary structure comprises 339 residues: Heat-inducible transcription repressor HrcA (339 aa).

This sequence belongs to the HrcA family.

Its function is as follows. Negative regulator of class I heat shock genes (grpE-dnaK-dnaJ and groELS operons). Prevents heat-shock induction of these operons. The polypeptide is Heat-inducible transcription repressor HrcA (Paraburkholderia xenovorans (strain LB400)).